The chain runs to 46 residues: Toxin Up-1 (46 aa).

The protein localises to the secreted. It localises to the nematocyst. It is found in the target cell membrane. This toxin is a potent hemolysin devoid of enzymatic activity. Its hemolytic activity is inhibited by sphingomyelin but not by cholesterol. In erythrocyte membranes, it causes numerous cell membrane ruptures. It also exerces cytotoxicity to different cell lines. It exerces a positive inotropic effect. Also causes hemorrhage and necrosis by dilation of the blood vessels in the skin, and vascular leakage of fluids and rupture of alveolar walls of the lungs. Is a potent ichtyotoxin. May act as a pore-forming toxin. The sequence is that of Toxin Up-1 from Urticina piscivora (Fish-eating sea anemone).